The primary structure comprises 258 residues: DNA repair protein RecO (258 aa).

Belongs to the RecO family.

In terms of biological role, involved in DNA repair and RecF pathway recombination. This chain is DNA repair protein RecO, found in Desulfatibacillum aliphaticivorans.